Consider the following 332-residue polypeptide: 2-oxoglutarate-dependent dioxygenase FG08081 (332 aa).

One can recognise a Fe2OG dioxygenase domain in the interval 176–280; the sequence is RSKSTLYFLH…RYSISYFLRA (105 aa). Residues His-201, Asp-203, and His-258 each contribute to the Fe cation site. Arg-271 is a binding site for 2-oxoglutarate.

This sequence belongs to the iron/ascorbate-dependent oxidoreductase family. Requires Fe(2+) as cofactor.

Its pathway is mycotoxin biosynthesis. Its function is as follows. 2-oxoglutarate-dependent dioxygenase; part of the gene cluster that mediates the biosynthesis of butenolide, a mycotoxin that shows antibiotic activity but does not seem to play a major role in the spread of head blight in wheat. Butenolide is derived from glutamic acid via a 4-acetamido-2-butenoic acid intermediate. The predicted function of the NADH:flavin oxidoreductase FG08077, the cytochrome P450 monooxygenase FG08079, the decarboxylase FG08083, and the putative acetyltransferase FG08082 are consistent with this pathway, however, the respective activities of the butelonide biosynthesis cluster enzymes have still to be experimentally determined. This is 2-oxoglutarate-dependent dioxygenase FG08081 from Gibberella zeae (strain ATCC MYA-4620 / CBS 123657 / FGSC 9075 / NRRL 31084 / PH-1) (Wheat head blight fungus).